Reading from the N-terminus, the 570-residue chain is Membrane protein insertase YidC (570 aa).

The span at 31–60 (QQPVAQTPSVTIDSNGADSSALLNSPNTGE) shows a compositional bias: polar residues. A disordered region spans residues 31-79 (QQPVAQTPSVTIDSNGADSSALLNSPNTGELDTPETASKPATAEDSNIS). The next 5 membrane-spanning stretches (helical) occupy residues 230-250 (PTFS…STPE), 378-398 (WGIA…HLSA), 444-464 (LGGC…YWVL), 487-507 (PYFV…SLNP), and 522-542 (PIIF…YWLV).

This sequence belongs to the OXA1/ALB3/YidC family. Type 1 subfamily. Interacts with the Sec translocase complex via SecD. Specifically interacts with transmembrane segments of nascent integral membrane proteins during membrane integration.

It is found in the cell inner membrane. In terms of biological role, required for the insertion and/or proper folding and/or complex formation of integral membrane proteins into the membrane. Involved in integration of membrane proteins that insert both dependently and independently of the Sec translocase complex, as well as at least some lipoproteins. Aids folding of multispanning membrane proteins. The sequence is that of Membrane protein insertase YidC from Hahella chejuensis (strain KCTC 2396).